The following is a 123-amino-acid chain: Large ribosomal subunit protein bL19 (123 aa).

It belongs to the bacterial ribosomal protein bL19 family.

This protein is located at the 30S-50S ribosomal subunit interface and may play a role in the structure and function of the aminoacyl-tRNA binding site. This is Large ribosomal subunit protein bL19 from Acinetobacter baylyi (strain ATCC 33305 / BD413 / ADP1).